The following is a 62-amino-acid chain: Large ribosomal subunit protein bL28 (62 aa).

Positions 1–22 are disordered; sequence MAKKCAISGKGPMSGNNVSHAK.

It belongs to the bacterial ribosomal protein bL28 family.

The chain is Large ribosomal subunit protein bL28 from Sulfurimonas denitrificans (strain ATCC 33889 / DSM 1251) (Thiomicrospira denitrificans (strain ATCC 33889 / DSM 1251)).